The chain runs to 355 residues: Putative [LysW]-L-2-aminoadipate/[LysW]-L-glutamate phosphate reductase (355 aa).

13–16 is an NADP(+) binding site; that stretch reads SGMT. The active site involves cysteine 153. Asparagine 323 contacts NADP(+).

This sequence belongs to the NAGSA dehydrogenase family. Type 1 subfamily. LysY sub-subfamily.

It localises to the cytoplasm. The catalysed reaction is [amino-group carrier protein]-C-terminal-N-(1-carboxy-5-oxopentan-1-yl)-L-glutamine + phosphate + NADP(+) = [amino-group carrier protein]-C-terminal-N-(1-carboxy-5-phosphooxy-5-oxopentan-1-yl)-L-glutamine + NADPH + H(+). The enzyme catalyses [amino-group carrier protein]-C-terminal-gamma-(L-glutamyl-5-semialdehyde)-L-glutamate + phosphate + NADP(+) = [amino-group carrier protein]-C-terminal-gamma-(5-phospho-L-glutamyl)-L-glutamate + NADPH + H(+). The protein operates within amino-acid biosynthesis; L-lysine biosynthesis via AAA pathway; L-lysine from L-alpha-aminoadipate (Thermus route): step 3/5. Its pathway is amino-acid biosynthesis; L-arginine biosynthesis. Its function is as follows. Involved in both the arginine and lysine biosynthetic pathways. The sequence is that of Putative [LysW]-L-2-aminoadipate/[LysW]-L-glutamate phosphate reductase from Aeropyrum pernix (strain ATCC 700893 / DSM 11879 / JCM 9820 / NBRC 100138 / K1).